The chain runs to 262 residues: MASSVLLVLSLFLVLLLTQASAELFFNFQTFNAANLILQGNAVSSKGHLLLTNVTHNGEPSVASSGRALYSAPIQIRDSTGNASSTPTSHSYTLQQIFQNVTDDPAWLFALVPVDSQPKKKGRLLGLFNKSENDINALTVAVEFDTCHNLDWDKNSIAVNLGIGSVPWNFRDYDGQNADVLITYDSSTKFLAVSLFYPITGKRNNVSANVELEKVLDDWVSVGFSATSGAYETHDVLSSSFASKLSSLDECPTGENLLNKIL.

A signal peptide spans 1 to 21 (MASSVLLVLSLFLVLLLTQAS). N-linked (GlcNAc...) asparagine glycosylation is found at Asn-53, Asn-82, Asn-100, Asn-129, and Asn-205.

The protein belongs to the leguminous lectin family.

Functionally, this metalloglycoprotein, containing Ca(2+), Mn(2+), binds glycoconjugates containing terminal non-reducing alpha-D-GalNAc residues. In Phaseolus lunatus (Lima bean), this protein is Lectin.